Consider the following 351-residue polypeptide: Phospho-N-acetylmuramoyl-pentapeptide-transferase (351 aa).

10 helical membrane-spanning segments follow: residues 3-23, 51-71, 76-96, 113-133, 152-172, 181-201, 223-243, 250-270, 275-295, and 329-349; these read GIIA…PPLI, TMGG…AHAV, PTVS…VGFL, GAKM…VTMF, FGPP…IVAT, GLDG…VIIG, PLDL…FLWF, IFMG…LAIT, LLLL…IIQV, and FWII…LEWM.

It belongs to the glycosyltransferase 4 family. MraY subfamily. Mg(2+) serves as cofactor.

The protein localises to the cell membrane. The enzyme catalyses UDP-N-acetyl-alpha-D-muramoyl-L-alanyl-gamma-D-glutamyl-meso-2,6-diaminopimeloyl-D-alanyl-D-alanine + di-trans,octa-cis-undecaprenyl phosphate = di-trans,octa-cis-undecaprenyl diphospho-N-acetyl-alpha-D-muramoyl-L-alanyl-D-glutamyl-meso-2,6-diaminopimeloyl-D-alanyl-D-alanine + UMP. It participates in cell wall biogenesis; peptidoglycan biosynthesis. In terms of biological role, catalyzes the initial step of the lipid cycle reactions in the biosynthesis of the cell wall peptidoglycan: transfers peptidoglycan precursor phospho-MurNAc-pentapeptide from UDP-MurNAc-pentapeptide onto the lipid carrier undecaprenyl phosphate, yielding undecaprenyl-pyrophosphoryl-MurNAc-pentapeptide, known as lipid I. This is Phospho-N-acetylmuramoyl-pentapeptide-transferase from Thermobifida fusca (strain YX).